The sequence spans 871 residues: Probable LRR receptor-like serine/threonine-protein kinase At1g51810 (871 aa).

The signal sequence occupies residues 1–20 (MERHCLFFVIFSLILHLVQA). Topologically, residues 21–512 (QDPIGFINLD…GRQIKSMTIP (492 aa)) are extracellular. Residues Asn-93, Asn-179, Asn-229, Asn-283, Asn-295, Asn-396, Asn-410, Asn-439, Asn-458, Asn-463, and Asn-489 are each glycosylated (N-linked (GlcNAc...) asparagine). LRR repeat units follow at residues 405–426 (IITS…TIQN), 429–449 (NLQE…EFLA), and 453–474 (SLLV…KLIE). The chain crosses the membrane as a helical span at residues 513 to 533 (IVASIGSVVAFTVALMIFCVV). Topologically, residues 534–871 (RKNNPSNDEA…FGTEVAPMAR (338 aa)) are cytoplasmic. Thr-568 carries the post-translational modification Phosphothreonine. The 274-residue stretch at 577–850 (NNFQKILGKG…QVVFELKECL (274 aa)) folds into the Protein kinase domain. Residues 583-591 (LGKGGFGIV) and Lys-605 contribute to the ATP site. Tyr-650 carries the post-translational modification Phosphotyrosine. The Proton acceptor role is filled by Asp-702. Ser-736 carries the post-translational modification Phosphoserine. Residues Thr-737 and Thr-742 each carry the phosphothreonine modification. Tyr-750 is subject to Phosphotyrosine.

This sequence belongs to the protein kinase superfamily. Ser/Thr protein kinase family.

It is found in the membrane. It catalyses the reaction L-seryl-[protein] + ATP = O-phospho-L-seryl-[protein] + ADP + H(+). The catalysed reaction is L-threonyl-[protein] + ATP = O-phospho-L-threonyl-[protein] + ADP + H(+). The chain is Probable LRR receptor-like serine/threonine-protein kinase At1g51810 from Arabidopsis thaliana (Mouse-ear cress).